Consider the following 124-residue polypeptide: uncharacterized protein (124 aa).

3 consecutive transmembrane segments (helical) span residues 14 to 34, 41 to 61, and 85 to 105; these read KAIV…YGWQ, FSYG…IIFY, and MVFI…AFFV.

It localises to the cell membrane. This is an uncharacterized protein from Haemophilus influenzae (strain ATCC 51907 / DSM 11121 / KW20 / Rd).